The sequence spans 79 residues: RNA-binding protein Hfq (79 aa).

The Sm domain maps to 10-69; sequence GPFLNALRKEHVPVSIYLVNGIKLQGNIESFDQYVVLLRNTVTQMVYKHAISTVVPARAV.

This sequence belongs to the Hfq family. Homohexamer.

Functionally, RNA chaperone that binds small regulatory RNA (sRNAs) and mRNAs to facilitate mRNA translational regulation in response to envelope stress, environmental stress and changes in metabolite concentrations. Also binds with high specificity to tRNAs. This Cupriavidus necator (strain ATCC 17699 / DSM 428 / KCTC 22496 / NCIMB 10442 / H16 / Stanier 337) (Ralstonia eutropha) protein is RNA-binding protein Hfq.